Consider the following 62-residue polypeptide: MTIAFQLAVFALIATSSILLISVPVVFASSDGWSSNKNIVFSGTSLWIGLVFLVAILNSLIS.

2 consecutive transmembrane segments (helical) span residues 8–28 (AVFALIATSSILLISVPVVFA) and 41–61 (FSGTSLWIGLVFLVAILNSLI).

This sequence belongs to the PsbZ family. PSII is composed of 1 copy each of membrane proteins PsbA, PsbB, PsbC, PsbD, PsbE, PsbF, PsbH, PsbI, PsbJ, PsbK, PsbL, PsbM, PsbT, PsbY, PsbZ, Psb30/Ycf12, at least 3 peripheral proteins of the oxygen-evolving complex and a large number of cofactors. It forms dimeric complexes.

The protein localises to the plastid. Its subcellular location is the chloroplast thylakoid membrane. In terms of biological role, may control the interaction of photosystem II (PSII) cores with the light-harvesting antenna, regulates electron flow through the 2 photosystem reaction centers. PSII is a light-driven water plastoquinone oxidoreductase, using light energy to abstract electrons from H(2)O, generating a proton gradient subsequently used for ATP formation. This chain is Photosystem II reaction center protein Z, found in Amborella trichopoda.